Reading from the N-terminus, the 614-residue chain is Phosphomethylpyrimidine synthase (614 aa).

Substrate is bound by residues Asn-226, Met-255, Tyr-284, His-320, Ser-340–Gly-342, Asp-381–Arg-384, and Glu-420. His-424 contributes to the Zn(2+) binding site. Tyr-447 is a substrate binding site. His-488 is a binding site for Zn(2+). Cys-568, Cys-571, and Cys-576 together coordinate [4Fe-4S] cluster.

The protein belongs to the ThiC family. In terms of assembly, homodimer. [4Fe-4S] cluster is required as a cofactor.

It carries out the reaction 5-amino-1-(5-phospho-beta-D-ribosyl)imidazole + S-adenosyl-L-methionine = 4-amino-2-methyl-5-(phosphooxymethyl)pyrimidine + CO + 5'-deoxyadenosine + formate + L-methionine + 3 H(+). It functions in the pathway cofactor biosynthesis; thiamine diphosphate biosynthesis. Functionally, catalyzes the synthesis of the hydroxymethylpyrimidine phosphate (HMP-P) moiety of thiamine from aminoimidazole ribotide (AIR) in a radical S-adenosyl-L-methionine (SAM)-dependent reaction. The sequence is that of Phosphomethylpyrimidine synthase from Acidovorax ebreus (strain TPSY) (Diaphorobacter sp. (strain TPSY)).